The chain runs to 166 residues: PTS system glucose-specific EIIA component (166 aa).

A PTS EIIA type-1 domain is found at 34–138 (DPVFAQKMMG…SVISPIIITN (105 aa)). H71 and H86 together coordinate Zn(2+). The active-site Tele-phosphohistidine intermediate; for EIIA activity is the H86. Position 86 is a phosphohistidine; by HPr (H86).

As to quaternary structure, heterodimer with glycerol kinase (glpk). It depends on Zn(2+) as a cofactor.

Its subcellular location is the cytoplasm. The phosphoenolpyruvate-dependent sugar phosphotransferase system (sugar PTS), a major carbohydrate active transport system, catalyzes the phosphorylation of incoming sugar substrates concomitantly with their translocation across the cell membrane. The enzyme II complex composed of PtsG and Crr is involved in glucose transport. The protein is PTS system glucose-specific EIIA component (crr) of Staphylococcus aureus (strain COL).